The following is a 384-amino-acid chain: DNA replication and repair protein RecF (384 aa).

An ATP-binding site is contributed by 30–37 (GNNAQGKS).

Belongs to the RecF family.

The protein resides in the cytoplasm. In terms of biological role, the RecF protein is involved in DNA metabolism; it is required for DNA replication and normal SOS inducibility. RecF binds preferentially to single-stranded, linear DNA. It also seems to bind ATP. In Gloeothece citriformis (strain PCC 7424) (Cyanothece sp. (strain PCC 7424)), this protein is DNA replication and repair protein RecF.